We begin with the raw amino-acid sequence, 298 residues long: S-adenosyl-L-methionine-dependent methyltransferase dpfgK (298 aa).

This sequence belongs to the methyltransferase superfamily.

It participates in secondary metabolite biosynthesis; terpenoid biosynthesis. Its function is as follows. S-adenosyl-L-methionine-dependent methyltransferase; part of the gene cluster that mediates the biosynthesis of diterpenoid pyrones. The first step of the pathway is the synthesis of the alpha-pyrone moiety by the polyketide synthase dpfgA via condensation of one acetyl-CoA starter unit with 3 malonyl-CoA units and 2 methylations. The alpha-pyrone is then combined with geranylgeranyl pyrophosphate (GGPP) formed by the GGPP synthase dpfgD through the action of the prenyltransferase dpfgC to yield a linear alpha-pyrone diterpenoid. Subsequent steps in the diterpenoid pyrone biosynthetic pathway involve the decalin core formation, which is initiated by the epoxidation of the C10-C11 olefin by the FAD-dependent oxidoreductase dpfgE, and is followed by a cyclization cascade catalyzed by the terpene cyclase dpfgB. The short chain dehydrogenase/reductase dpfgG then oxidizes the 8S hydroxy group to a ketone and the short chain dehydrogenase/reductase dpfgH reduces the ketone to the 8R hydroxy group to yield higginsianin B. Higginsianin B is further methylated by the methyltransferase dpfgI to produce the intermediate named FDDP B. The cytochrome P450 monooxygenase dfgpJ then catalyzes a three-step oxidation at C-27 to generate a carboxylic acid as well as C-26 hydroxylation. Finally, methyltransferase dpfgK methylates the carboxylic acid generated by dpfgJ, yielding the final diterpenoid pyrones from the pathway which were named FDDP D and FDDP E. This chain is S-adenosyl-L-methionine-dependent methyltransferase dpfgK, found in Gibberella zeae (strain ATCC MYA-4620 / CBS 123657 / FGSC 9075 / NRRL 31084 / PH-1) (Wheat head blight fungus).